The primary structure comprises 456 residues: MFS-type transporter SLC18B1 (456 aa).

M1 is modified (N-acetylmethionine). The segment at 1–24 (MEALGDLEGPRAPGGDDPAGSAGE) is disordered. Topologically, residues 1-33 (MEALGDLEGPRAPGGDDPAGSAGETPGWLSREQ) are cytoplasmic. Residues 10–23 (PRAPGGDDPAGSAG) show a composition bias toward low complexity. S21 carries the post-translational modification Phosphoserine. Residues 34–54 (VFVLISAASVNLGSMMCYSIL) form a helical membrane-spanning segment. The Extracellular portion of the chain corresponds to 55 to 70 (GPFFPKEAEKKGASNT). The chain crosses the membrane as a helical span at residues 71–91 (IIGMIFGCFALFELLASLVFG). Over 92 to 100 (NYLVHIGAK) the chain is Cytoplasmic. The helical transmembrane segment at 101–121 (FMFVAGMFVSGGVTILFGVLD) threads the bilayer. Residues 122–127 (RVPDGP) are Extracellular-facing. A helical membrane pass occupies residues 128–148 (VFIAMCFLVRVMDAVSFAAAM). The Cytoplasmic portion of the chain corresponds to 149–161 (TASSSILAKAFPN). A helical transmembrane segment spans residues 162-184 (NVATVLGSLETFSGLGLILGPPV). Topologically, residues 185 to 195 (GGFLYQSFGYE) are extracellular. Residues 196–216 (VPFIVLGCVVLLMVPLNMYIL) traverse the membrane as a helical segment. At 217–230 (PNYESDPGEHSFWK) the chain is on the cytoplasmic side. Residues 231-251 (LIALPKVGLIAFVINSLSSCF) traverse the membrane as a helical segment. Residues 252-272 (GFLDPTLSLFVLEKFNLPAGY) are Extracellular-facing. A helical membrane pass occupies residues 273 to 293 (VGLVFLGMALSYAISSPLFGL). Topologically, residues 294 to 304 (LSDKRPPLRKW) are cytoplasmic. A helical membrane pass occupies residues 305 to 325 (LLVFGNLITAGCYMLLGPVPI). The Extracellular segment spans residues 326–331 (LHIKSQ). A helical transmembrane segment spans residues 332–352 (LWLLVLILVVSGLSAGMSIIP). The Cytoplasmic portion of the chain corresponds to 353–377 (TFPEILSCAHENGFEEGLSTLGLVS). A helical membrane pass occupies residues 378–398 (GLFSAMWSIGAFMGPTLGGFL). Topologically, residues 399 to 407 (YEKIGFEWA) are extracellular. Residues 408–428 (AAIQGLWALISGLAMGLFYLL) form a helical membrane-spanning segment. At 429-456 (EYSRRKRSKSQNILSTEEERTTLLPNET) the chain is on the cytoplasmic side. At S438 the chain carries Phosphoserine.

It belongs to the major facilitator superfamily. In terms of tissue distribution, expressed in various tissues including lung, placenta, adrenal gland, liver, testis, and brain.

It is found in the cytoplasmic vesicle. Its subcellular location is the secretory vesicle membrane. The protein localises to the secretory vesicle. It localises to the synaptic vesicle membrane. It catalyses the reaction spermine(in) + n H(+)(out) = spermine(out) + n H(+)(in). The catalysed reaction is spermidine(in) + n H(+)(out) = spermidine(out) + n H(+)(in). The enzyme catalyses serotonin(in) + n H(+)(out) = serotonin(out) + n H(+)(in). Functionally, proton-coupled polyamine antiporter involved in the translocation of polyamines from cytosol into secretory vesicles prior to their release via exocytosis. Uses the electrochemical proton gradient generated by a V-type proton-pumping ATPase to couple the efflux of protons with the uptake of a polyamine molecule. Facilitates vesicular storage of spermine and spermidine in astrocytes with an impact on glutamatergic neuronal transmission and memory formation. Upon antigen stimulation, regulates polyamine accumulation and release in mast cell secretory granules, which in turn potentiates mast cell degranulation and histamine secretion. The chain is MFS-type transporter SLC18B1 from Homo sapiens (Human).